We begin with the raw amino-acid sequence, 126 residues long: Fluoride-specific ion channel FluC 1 (126 aa).

A run of 4 helical transmembrane segments spans residues 1-21 (MAGS…GAWL), 38-58 (WGTF…LALY), 67-87 (LALL…TFAV), and 99-119 (FVSL…AGVG). 2 residues coordinate Na(+): G77 and S80.

It belongs to the fluoride channel Fluc/FEX (TC 1.A.43) family.

The protein localises to the cell inner membrane. The enzyme catalyses fluoride(in) = fluoride(out). With respect to regulation, na(+) is not transported, but it plays an essential structural role and its presence is essential for fluoride channel function. Functionally, fluoride-specific ion channel. Important for reducing fluoride concentration in the cell, thus reducing its toxicity. The chain is Fluoride-specific ion channel FluC 1 from Synechococcus sp. (strain CC9902).